Here is an 861-residue protein sequence, read N- to C-terminus: ATP-dependent helicase rhp16 (861 aa).

Polar residues predominate over residues 1-13 (MGTSCNKINSNSN). A disordered region spans residues 1–217 (MGTSCNKINS…KSIPSHERTH (217 aa)). 2 stretches are compositionally biased toward basic and acidic residues: residues 14 to 23 (KGKENMHFVL) and 38 to 57 (VERD…KEFE). Over residues 60–82 (LSTNKKLIIQSNNTSSQHSTPPL) the composition is skewed to polar residues. A compositionally biased stretch (low complexity) spans 83–95 (SISDTSTHTGSST). Residues 96–106 (DNVEANPNTGF) are compositionally biased toward polar residues. Residues 109 to 123 (ARKRSLRSSNLKKKF) are compositionally biased toward basic residues. A compositionally biased stretch (acidic residues) spans 131 to 145 (ESNESEFIDDDESDE). Low complexity predominate over residues 193-204 (ARASSSASSSSR). The Helicase ATP-binding domain occupies 268 to 442 (RQEDSSFGGG…FSLLRFLRAD (175 aa)). 281-288 (DEMGMGKT) lines the ATP pocket. A DEAH box motif is present at residues 393 to 396 (DEAH). An RING-type zinc finger spans residues 609–652 (CKICDEVAQDAIESRCHHTFCRLCVTEYINAAGDGENVNCPSCF). A Helicase C-terminal domain is found at 695-848 (LVEELYLLRK…TIDQDEKALN (154 aa)).

This sequence belongs to the SNF2/RAD54 helicase family.

The protein localises to the nucleus. In terms of biological role, involved in global genome repair (GGR) via nucleotide excision repair (NER), in conjunction with rhp7, after UV irradiation. The chain is ATP-dependent helicase rhp16 (rhp16) from Schizosaccharomyces pombe (strain 972 / ATCC 24843) (Fission yeast).